A 472-amino-acid chain; its full sequence is Chromosomal replication initiator protein DnaA (472 aa).

Residues 1-73 (MSNMEQDRWS…LSCWQAELPE (73 aa)) are domain I, interacts with DnaA modulators. Residues 73-128 (EVNRVDLTVRSPVRCATPAKEVPAPVESRRDEQRPSAERSNGATPVSANHDALGGS) form a domain II region. The disordered stretch occupies residues 90–124 (PAKEVPAPVESRRDEQRPSAERSNGATPVSANHDA). A compositionally biased stretch (basic and acidic residues) spans 99 to 109 (ESRRDEQRPSA). The segment covering 110–119 (ERSNGATPVS) has biased composition (polar residues). The segment at 129 to 351 (PLDPRLTFAS…GAINRLLAHS (223 aa)) is domain III, AAA+ region. Residues Gly176, Gly178, Lys179, and Thr180 each coordinate ATP. The interval 352–472 (KLNNQPVTLE…VESLKRQLQE (121 aa)) is domain IV, binds dsDNA.

It belongs to the DnaA family. In terms of assembly, oligomerizes as a right-handed, spiral filament on DNA at oriC.

It is found in the cytoplasm. Its function is as follows. Plays an essential role in the initiation and regulation of chromosomal replication. ATP-DnaA binds to the origin of replication (oriC) to initiate formation of the DNA replication initiation complex once per cell cycle. Binds the DnaA box (a 9 base pair repeat at the origin) and separates the double-stranded (ds)DNA. Forms a right-handed helical filament on oriC DNA; dsDNA binds to the exterior of the filament while single-stranded (ss)DNA is stabiized in the filament's interior. The ATP-DnaA-oriC complex binds and stabilizes one strand of the AT-rich DNA unwinding element (DUE), permitting loading of DNA polymerase. After initiation quickly degrades to an ADP-DnaA complex that is not apt for DNA replication. Binds acidic phospholipids. In Rhodopseudomonas palustris (strain ATCC BAA-98 / CGA009), this protein is Chromosomal replication initiator protein DnaA.